The sequence spans 236 residues: Purine nucleoside phosphorylase DeoD-type 2 (236 aa).

A purine D-ribonucleoside is bound at residue H5. Residues G21, R25, R44, and 88–91 contribute to the phosphate site; that span reads RVGS. A purine D-ribonucleoside-binding positions include 180-182 and 204-205; these read DME and SD. Residue D205 is the Proton donor of the active site.

The protein belongs to the PNP/UDP phosphorylase family. As to quaternary structure, homohexamer; trimer of homodimers.

The enzyme catalyses a purine D-ribonucleoside + phosphate = a purine nucleobase + alpha-D-ribose 1-phosphate. It carries out the reaction a purine 2'-deoxy-D-ribonucleoside + phosphate = a purine nucleobase + 2-deoxy-alpha-D-ribose 1-phosphate. Its function is as follows. Catalyzes the reversible phosphorolytic breakdown of the N-glycosidic bond in the beta-(deoxy)ribonucleoside molecules, with the formation of the corresponding free purine bases and pentose-1-phosphate. This is Purine nucleoside phosphorylase DeoD-type 2 from Aliivibrio fischeri (strain ATCC 700601 / ES114) (Vibrio fischeri).